Here is a 593-residue protein sequence, read N- to C-terminus: Cell surface glycoprotein (593 aa).

An N-terminal signal peptide occupies residues 1–22 (MRKFTLLMLLLIVISMSGIAGA). Asn29, Asn58, Asn66, Asn74, Asn114, Asn122, Asn145, Asn148, Asn158, Asn176, Asn208, Asn231, Asn326, Asn336, Asn340, Asn431, Asn471, Asn500, and Asn516 each carry an N-linked (GalNAc...) asparagine glycan.

N-glycosylated; contains glycans composed of methyl-Man, Man and GalNAc residues in a molar ratio of 2:3:1.

Its subcellular location is the secreted. The protein resides in the cell wall. It is found in the S-layer. Its function is as follows. The S-layer is a paracrystalline mono-layered assembly of proteins which coat the surface of the cell. In Methanothermus fervidus (strain ATCC 43054 / DSM 2088 / JCM 10308 / V24 S), this protein is Cell surface glycoprotein (slgA).